A 443-amino-acid polypeptide reads, in one-letter code: Signal recognition particle 54 kDa protein (443 aa).

Residues 107–114 (GVQGSGKT), 189–193 (DTAGR), and 247–250 (TKLD) contribute to the GTP site.

It belongs to the GTP-binding SRP family. SRP54 subfamily. Part of the signal recognition particle protein translocation system, which is composed of SRP and FtsY. Archaeal SRP consists of a 7S RNA molecule of 300 nucleotides and two protein subunits: SRP54 and SRP19.

The protein localises to the cytoplasm. The enzyme catalyses GTP + H2O = GDP + phosphate + H(+). Its function is as follows. Involved in targeting and insertion of nascent membrane proteins into the cytoplasmic membrane. Binds to the hydrophobic signal sequence of the ribosome-nascent chain (RNC) as it emerges from the ribosomes. The SRP-RNC complex is then targeted to the cytoplasmic membrane where it interacts with the SRP receptor FtsY. The protein is Signal recognition particle 54 kDa protein of Pyrococcus abyssi (strain GE5 / Orsay).